We begin with the raw amino-acid sequence, 347 residues long: NADH-ubiquinone oxidoreductase chain 2 (347 aa).

Transmembrane regions (helical) follow at residues 3–23, 25–45, 60–80, 96–116, 149–169, 178–198, 200–220, 237–257, 274–294, and 323–343; these read PPIL…VLTS, HWLT…PILM, LLTQ…NLMF, AMVT…FWVP, IDPN…GWGG, ILAY…LYNP, MMLL…MLFM, APLI…LPPL, EMII…YFYM, and MILL…TPLL.

Belongs to the complex I subunit 2 family. In terms of assembly, core subunit of respiratory chain NADH dehydrogenase (Complex I) which is composed of 45 different subunits. Interacts with TMEM242.

It localises to the mitochondrion inner membrane. The catalysed reaction is a ubiquinone + NADH + 5 H(+)(in) = a ubiquinol + NAD(+) + 4 H(+)(out). Functionally, core subunit of the mitochondrial membrane respiratory chain NADH dehydrogenase (Complex I) which catalyzes electron transfer from NADH through the respiratory chain, using ubiquinone as an electron acceptor. Essential for the catalytic activity and assembly of complex I. This Mungos mungo (Banded mongoose) protein is NADH-ubiquinone oxidoreductase chain 2.